Reading from the N-terminus, the 436-residue chain is Nicotinate phosphoribosyltransferase (436 aa).

Histidine 231 carries the post-translational modification Phosphohistidine; by autocatalysis.

This sequence belongs to the NAPRTase family. Transiently phosphorylated on a His residue during the reaction cycle. Phosphorylation strongly increases the affinity for substrates and increases the rate of nicotinate D-ribonucleotide production. Dephosphorylation regenerates the low-affinity form of the enzyme, leading to product release.

The catalysed reaction is nicotinate + 5-phospho-alpha-D-ribose 1-diphosphate + ATP + H2O = nicotinate beta-D-ribonucleotide + ADP + phosphate + diphosphate. It participates in cofactor biosynthesis; NAD(+) biosynthesis; nicotinate D-ribonucleotide from nicotinate: step 1/1. Catalyzes the synthesis of beta-nicotinate D-ribonucleotide from nicotinate and 5-phospho-D-ribose 1-phosphate at the expense of ATP. The sequence is that of Nicotinate phosphoribosyltransferase from Vibrio campbellii (strain ATCC BAA-1116).